Here is a 376-residue protein sequence, read N- to C-terminus: Fibromodulin (376 aa).

The N-terminal stretch at 1-18 is a signal peptide; the sequence is MQWASVLLLAGLCSLSQG. Position 19 is a pyrrolidone carboxylic acid (glutamine 19). Tyrosine 20, tyrosine 38, tyrosine 53, tyrosine 55, tyrosine 63, and tyrosine 65 each carry sulfotyrosine. In terms of domain architecture, LRRNT spans 67–105; the sequence is APPPPEPRDCPQECDCPPNFPTAMYCDNRNLKYLPFVPS. LRR repeat units follow at residues 106–127, 130–151, 156–176, 177–198, 201–222, 224–245, 246–266, and 269–289; these read RMKYVYFQNNQISAIQEGVFDN, GLLWVALHGNQITSDKVGRKVF, HLERLYLDHNNLTRMPGPLPR, SLRELHLDHNQISRVPNNALEG, NLTALYLHHNEIQEVGSSMRGL, SLILLDLSYNHLRRVPDGLPSA, LEQLYLEHNNVYTVPDSYFRG, and KLLYVRLSHNSLTNNGLATNT. Asparagine 127 carries an N-linked (GlcNAc...) (keratan sulfate) asparagine glycan. Asparagine 166 is a glycosylation site (N-linked (GlcNAc...) (keratan sulfate) asparagine). N-linked (GlcNAc...) (keratan sulfate) asparagine glycosylation is present at asparagine 201. Asparagine 291 carries N-linked (GlcNAc...) (keratan sulfate) asparagine glycosylation. 2 LRR repeats span residues 294–315 and 316–335; these read SLLELDLSYNQLQKIPPVNTNL and ENLYLQGNRINEFSISSFCT. A disulfide bond links cysteine 334 and cysteine 367. N-linked (GlcNAc...) asparagine glycosylation is present at asparagine 341. One copy of the LRR 11 repeat lies at 344–367; it reads KLQVLRLDGNEIKRSAMPVDAPLC.

Belongs to the small leucine-rich proteoglycan (SLRP) family. SLRP class II subfamily. Binds to type I and type II collagen. Binds keratan sulfate chains. Post-translationally, sulfated on tyrosine residue(s). As to expression, highest levels observed in knee epiphysis, in calvarial and diaphyseal bone, in nasal and costal cartilage, in the eye, and in bladder. In mature knee joint it is mostly present in the proliferating zone of growth plate. It is also observed in ligaments, especially at insertion sites, in the junction between meniscus and joint capsule, in the perimysium of skeletal muscle and in the periosteum.

Its subcellular location is the secreted. The protein localises to the extracellular space. The protein resides in the extracellular matrix. In terms of biological role, affects the rate of fibrils formation. May have a primary role in collagen fibrillogenesis. The protein is Fibromodulin (Fmod) of Mus musculus (Mouse).